The following is a 470-amino-acid chain: MNPNQKIITIGSISLGLVVFNVLLHVVSIIVTVLILGKGENNGICNGTVVREYNETVRIERVTQWHNTNVVEYVPYWNGGTYMNNTEAICDVKGFAPFSNDNGIRIGSRGHVFVIREPFVSCSPIECRAFFLTQGSLLNDKHSNGTVKDRSPFRTLMSVEVGQSPNVYQARFEAVAWSATACHDGKKWMTVGVTGPDSKAVAVIHYGGVPTDVVNSWVGDILRTQESSCTCIQGDCYWVMTDGPANRQAQYRIYKANQGRIIGQTDVSFNGGHIEECSCYPNDGKVECVCRDNWTGTNRPVLVISPDLSYRVGYLCAGIPSDTPRGEDAQFTGSCTSPIGNQGYGVKGFGFRQGTDVWMGRTISRTSRSGFEILRIKNGWTQTSKEQVKRQVVVDNLNWSGYSGSFTLPVELSGKDCLVPCFWVEMIRGKPEEKTIWTSSSSIVMCGVDYEVADWSWHDGAILPFDIDKM.

Topologically, residues 1-14 (MNPNQKIITIGSIS) are intravirion. The segment at 11–32 (GSISLGLVVFNVLLHVVSIIVT) is involved in apical transport and lipid raft association. The chain crosses the membrane as a helical span at residues 15–35 (LGLVVFNVLLHVVSIIVTVLI). Residues 32 to 86 (TVLILGKGENNGICNGTVVREYNETVRIERVTQWHNTNVVEYVPYWNGGTYMNNT) are hypervariable stalk region. Over 36–470 (LGKGENNGIC…AILPFDIDKM (435 aa)) the chain is Virion surface. Residues asparagine 46, asparagine 54, and asparagine 84 are each glycosylated (N-linked (GlcNAc...) asparagine; by host). Positions 89–470 (ICDVKGFAPF…AILPFDIDKM (382 aa)) are head of neuraminidase. 8 cysteine pairs are disulfide-bonded: cysteine 90/cysteine 417, cysteine 122/cysteine 127, cysteine 182/cysteine 229, cysteine 231/cysteine 236, cysteine 277/cysteine 290, cysteine 279/cysteine 288, cysteine 316/cysteine 335, and cysteine 421/cysteine 446. Arginine 116 contacts substrate. Asparagine 144 carries an N-linked (GlcNAc...) asparagine; by host glycan. Aspartate 149 functions as the Proton donor/acceptor in the catalytic mechanism. Arginine 150 contributes to the substrate binding site. 275 to 276 (EE) is a substrate binding site. Arginine 291 contributes to the substrate binding site. Aspartate 292 provides a ligand contact to Ca(2+). N-linked (GlcNAc...) asparagine; by host glycosylation is present at asparagine 293. The Ca(2+) site is built by glycine 296 and aspartate 322. Arginine 368 contributes to the substrate binding site. The N-linked (GlcNAc...) asparagine; by host glycan is linked to asparagine 398. Tyrosine 402 functions as the Nucleophile in the catalytic mechanism.

Belongs to the glycosyl hydrolase 34 family. In terms of assembly, homotetramer. It depends on Ca(2+) as a cofactor. In terms of processing, N-glycosylated.

Its subcellular location is the virion membrane. It localises to the host apical cell membrane. The enzyme catalyses Hydrolysis of alpha-(2-&gt;3)-, alpha-(2-&gt;6)-, alpha-(2-&gt;8)- glycosidic linkages of terminal sialic acid residues in oligosaccharides, glycoproteins, glycolipids, colominic acid and synthetic substrates.. Its activity is regulated as follows. Inhibited by the neuraminidase inhibitors zanamivir (Relenza) and oseltamivir (Tamiflu). These drugs interfere with the release of progeny virus from infected cells and are effective against all influenza strains. Resistance to neuraminidase inhibitors is quite rare. Catalyzes the removal of terminal sialic acid residues from viral and cellular glycoconjugates. Cleaves off the terminal sialic acids on the glycosylated HA during virus budding to facilitate virus release. Additionally helps virus spread through the circulation by further removing sialic acids from the cell surface. These cleavages prevent self-aggregation and ensure the efficient spread of the progeny virus from cell to cell. Otherwise, infection would be limited to one round of replication. Described as a receptor-destroying enzyme because it cleaves a terminal sialic acid from the cellular receptors. May facilitate viral invasion of the upper airways by cleaving the sialic acid moieties on the mucin of the airway epithelial cells. Likely to plays a role in the budding process through its association with lipid rafts during intracellular transport. May additionally display a raft-association independent effect on budding. Plays a role in the determination of host range restriction on replication and virulence. Sialidase activity in late endosome/lysosome traffic seems to enhance virus replication. The chain is Neuraminidase from Influenza A virus (strain A/Turkey/Ireland/1378/1983 H5N8).